The following is a 30-amino-acid chain: Cycloviolacin-O5 (30 aa).

Residues Gly1–Asn30 constitute a cross-link (cyclopeptide (Gly-Asn)). Cystine bridges form between Cys4–Cys20, Cys8–Cys22, and Cys13–Cys27.

In terms of processing, this is a cyclic peptide.

In terms of biological role, probably participates in a plant defense mechanism. This Viola odorata (Sweet violet) protein is Cycloviolacin-O5.